A 476-amino-acid polypeptide reads, in one-letter code: Homeobox even-skipped homolog protein 2 (476 aa).

Disordered regions lie at residues 82–113 and 142–185; these read TGSESTVSSEISSAAESRKKPGHYSEAAAEAD and KGYA…GSGA. 2 stretches are compositionally biased toward low complexity: residues 84–96 and 147–159; these read SESTVSSEISSAA and SGSAAGTTTSASG. Residues 160–183 show a composition bias toward gly residues; sequence SGLGSLHGGSGGSGGSAALGGSGS. The segment at residues 188–247 is a DNA-binding region (homeobox); the sequence is VRRYRTAFTREQIARLEKEFYRENYVSRPRRCELAAALNLPETTIKVWFQNRRMKDKRQR.

It belongs to the even-skipped homeobox family.

It is found in the nucleus. In Homo sapiens (Human), this protein is Homeobox even-skipped homolog protein 2 (EVX2).